Here is an 875-residue protein sequence, read N- to C-terminus: Alanine--tRNA ligase (875 aa).

Positions 596, 600, 700, and 704 each coordinate Zn(2+).

Belongs to the class-II aminoacyl-tRNA synthetase family. The cofactor is Zn(2+).

The protein localises to the cytoplasm. The catalysed reaction is tRNA(Ala) + L-alanine + ATP = L-alanyl-tRNA(Ala) + AMP + diphosphate. Catalyzes the attachment of alanine to tRNA(Ala) in a two-step reaction: alanine is first activated by ATP to form Ala-AMP and then transferred to the acceptor end of tRNA(Ala). Also edits incorrectly charged Ser-tRNA(Ala) and Gly-tRNA(Ala) via its editing domain. The chain is Alanine--tRNA ligase from Methanocella arvoryzae (strain DSM 22066 / NBRC 105507 / MRE50).